Reading from the N-terminus, the 340-residue chain is Glycerol-3-phosphate dehydrogenase [NAD(P)+] (340 aa).

Ser-23, Trp-24, Arg-43, Lys-44, and Lys-113 together coordinate NADPH. Residues Lys-113, Gly-141, and Thr-143 each contribute to the sn-glycerol 3-phosphate site. Residue Ala-145 coordinates NADPH. The sn-glycerol 3-phosphate site is built by Lys-196, Asp-249, Ser-259, Arg-260, and Asn-261. Lys-196 serves as the catalytic Proton acceptor. Arg-260 contributes to the NADPH binding site. Glu-286 is an NADPH binding site.

It belongs to the NAD-dependent glycerol-3-phosphate dehydrogenase family.

It is found in the cytoplasm. It catalyses the reaction sn-glycerol 3-phosphate + NAD(+) = dihydroxyacetone phosphate + NADH + H(+). The enzyme catalyses sn-glycerol 3-phosphate + NADP(+) = dihydroxyacetone phosphate + NADPH + H(+). Its pathway is membrane lipid metabolism; glycerophospholipid metabolism. In terms of biological role, catalyzes the reduction of the glycolytic intermediate dihydroxyacetone phosphate (DHAP) to sn-glycerol 3-phosphate (G3P), the key precursor for phospholipid synthesis. In Zymomonas mobilis subsp. mobilis (strain ATCC 31821 / ZM4 / CP4), this protein is Glycerol-3-phosphate dehydrogenase [NAD(P)+].